Here is a 401-residue protein sequence, read N- to C-terminus: Serine/threonine transporter SstT (401 aa).

8 helical membrane-spanning segments follow: residues Ile-17–Ile-37, Phe-40–Val-60, Val-78–Tyr-98, Ala-138–Phe-158, Val-179–Ile-199, Leu-212–Ile-232, Met-295–Ile-315, and Ala-336–Ile-356.

It belongs to the dicarboxylate/amino acid:cation symporter (DAACS) (TC 2.A.23) family.

The protein resides in the cell membrane. It carries out the reaction L-serine(in) + Na(+)(in) = L-serine(out) + Na(+)(out). It catalyses the reaction L-threonine(in) + Na(+)(in) = L-threonine(out) + Na(+)(out). Its function is as follows. Involved in the import of serine and threonine into the cell, with the concomitant import of sodium (symport system). This Streptococcus suis (strain 98HAH33) protein is Serine/threonine transporter SstT.